The chain runs to 509 residues: Transcription factor SOX-9 (509 aa).

Disordered stretches follow at residues 1-67 (MNLL…SEED) and 160-273 (RLRV…FRDV). Positions 30–41 (SAGSPCPSGSGS) are enriched in low complexity. Over residues 42 to 52 (DTENTRPQENT) the composition is skewed to polar residues. Composition is skewed to basic and acidic residues over residues 56-67 (GEPDLKKESEED) and 160-174 (RLRV…DYKY). Residues 63–103 (ESEEDKFPVCIREAVSQVLKGYDWTLVPMPVRVNGSSKNKP) are dimerization (DIM). A PQA region spans residues 63-103 (ESEEDKFPVCIREAVSQVLKGYDWTLVPMPVRVNGSSKNKP). Serine 64 carries the phosphoserine modification. A DNA-binding region (HMG box) is located at residues 105-173 (VKRPMNAFMV…QHKKDHPDYK (69 aa)). Position 211 is a phosphoserine (serine 211). Residues 224-307 (PGEHSGQSQG…LPPNGHPGVP (84 aa)) are transactivation domain (TAM). 2 short sequence motifs (9aaTAD) span residues 275-284 (IGELSSDVIS) and 290-298 (DVNEFDQYL). Residues 334–415 (VWMSKQQAPP…HYSEQQQHSP (82 aa)) form a disordered region. A compositionally biased stretch (pro residues) spans 341–376 (APPPPPQQPPQAPPAPQAPPQPQAAPPQQPAAPPQQ). The span at 380-415 (HTLTTLSSEPGQSQRTHIKTEQLSPSHYSEQQQHSP) shows a compositional bias: polar residues. The interval 394 to 509 (RTHIKTEQLS…QPVYTQLTRP (116 aa)) is transactivation domain (TAC). Lysine 398 participates in a covalent cross-link: Glycyl lysine isopeptide (Lys-Gly) (interchain with G-Cter in ubiquitin). Positions 460–468 (TGLYSTFTY) match the 9aaTAD 3 motif. The tract at residues 479 to 509 (PIADTSGVPSIPQTHSPQHWEQPVYTQLTRP) is disordered. Residues 485 to 509 (GVPSIPQTHSPQHWEQPVYTQLTRP) are compositionally biased toward polar residues.

In terms of assembly, homodimer; homodimerization is required for activity. Interacts (via C-terminus) with ZNF219; forming a complex that binds to the COL2A1 promoter and activates COL2A1 expression. Interacts with DDRGK1. Interacts with EP300/p300. Interacts with beta-catenin (CTNNB1); inhibiting CTNNB1 activity by competing with the binding sites of TCF/LEF within CTNNB1. Post-translationally, acetylated; acetylation impairs nuclear localization and ability to transactivate expression of target genes. Deacetylated by SIRT1. In terms of processing, phosphorylation at Ser-64 and Ser-211 by PKA increases transcriptional activity and may help delay chondrocyte maturation downstream of PTHLH/PTHrP signaling. Phosphorylation at either Ser-64 or Ser-211 is required for sumoylation, but phosphorylation is not dependent on sumoylation. Phosphorylated on tyrosine residues; tyrosine dephosphorylation by PTPN11/SHP2 blocks SOX9 phosphorylation by PKA and subsequent SUMOylation. Sumoylated; phosphorylation at either Ser-64 or Ser-211 is required for sumoylation. Sumoylation is induced by BMP signaling pathway. Post-translationally, ubiquitinated; ubiquitination leads to proteasomal degradation and is negatively regulated by DDRGK1.

It is found in the nucleus. In terms of biological role, transcription factor that plays a key role in chondrocytes differentiation and skeletal development. Specifically binds the 5'-ACAAAG-3' DNA motif present in enhancers and super-enhancers and promotes expression of genes important for chondrogenesis, including cartilage matrix protein-coding genes COL2A1, COL4A2, COL9A1, COL11A2 and ACAN, SOX5 and SOX6. Also binds to some promoter regions. Plays a central role in successive steps of chondrocyte differentiation. Absolutely required for precartilaginous condensation, the first step in chondrogenesis during which skeletal progenitors differentiate into prechondrocytes. Together with SOX5 and SOX6, required for overt chondrogenesis when condensed prechondrocytes differentiate into early stage chondrocytes, the second step in chondrogenesis. Later, required to direct hypertrophic maturation and block osteoblast differentiation of growth plate chondrocytes: maintains chondrocyte columnar proliferation, delays prehypertrophy and then prevents osteoblastic differentiation of chondrocytes by lowering beta-catenin (CTNNB1) signaling and RUNX2 expression. Also required for chondrocyte hypertrophy, both indirectly, by keeping the lineage fate of chondrocytes, and directly, by remaining present in upper hypertrophic cells and transactivating COL10A1 along with MEF2C. Low lipid levels are the main nutritional determinant for chondrogenic commitment of skeletal progenitor cells: when lipids levels are low, FOXO (FOXO1 and FOXO3) transcription factors promote expression of SOX9, which induces chondrogenic commitment and suppresses fatty acid oxidation. Mechanistically, helps, but is not required, to remove epigenetic signatures of transcriptional repression and deposit active promoter and enhancer marks at chondrocyte-specific genes. Acts in cooperation with the Hedgehog pathway-dependent GLI (GLI1 and GLI3) transcription factors. In addition to cartilage development, also acts as a regulator of proliferation and differentiation in epithelial stem/progenitor cells: involved in the lung epithelium during branching morphogenesis, by balancing proliferation and differentiation and regulating the extracellular matrix. Controls epithelial branching during kidney development. In Callithrix jacchus (White-tufted-ear marmoset), this protein is Transcription factor SOX-9 (SOX9).